We begin with the raw amino-acid sequence, 382 residues long: Non-structural maintenance of chromosomes element 4 homolog A (382 aa).

Basic and acidic residues predominate over residues 1-21 (MSGDSSGRRPEGRGRGRDPHR). The interval 1–80 (MSGDSSGRRP…ASLEEETDPS (80 aa)) is disordered. Residues 31-41 (RSPLSPGSRRG) show a composition bias toward low complexity. Basic and acidic residues predominate over residues 42 to 55 (AAPERREAPERPGL). The span at 56–78 (EDTEPSDSGDEMIDPASLEEETD) shows a compositional bias: acidic residues. A Phosphothreonine modification is found at T342. S374 carries the phosphoserine modification.

Belongs to the NSE4 family. Component of the SMC5-SMC6 complex which consists at least of SMC5, SMC6, NSMCE2, NSMCE1, NSMCE4A or EID3 and NSMCE3. NSMCE1, NSMCE4A or EID3 and NSMCE3 probably form a subcomplex that bridges the head domains of the SMC5:SMC6 heterodimer. Interacts with NSMCE3.

The protein localises to the nucleus. It is found in the chromosome. The protein resides in the telomere. Functionally, component of the SMC5-SMC6 complex, a complex involved in repair of DNA double-strand breaks by homologous recombination. The complex may promote sister chromatid homologous recombination by recruiting the SMC1-SMC3 cohesin complex to double-strand breaks. The complex is required for telomere maintenance via recombination and mediates sumoylation of shelterin complex (telosome) components. The sequence is that of Non-structural maintenance of chromosomes element 4 homolog A (NSMCE4A) from Bos taurus (Bovine).